A 1098-amino-acid polypeptide reads, in one-letter code: Tudor domain-containing protein 7 (1098 aa).

The HTH OST-type 1 domain maps to 3–76 (EGDLVSKMLR…SGEITCYAMA (74 aa)). The tract at residues 129–156 (ASNFSVGKKPNPAPLRDKGNSVGVKPDA) is disordered. The HTH OST-type 2 domain occupies 233–302 (KMDEVQNRIK…GQDLLLYPAK (70 aa)). Residue Ser319 is modified to Phosphoserine. An HTH OST-type 3 domain is found at 337 to 406 (MAGDFKEKVA…PQKAILYAKL (70 aa)). Tudor domains are found at residues 513-570 (AVNV…FCSL) and 703-760 (LPFC…FLQE). The interval 855-874 (SGADSPNSKNGNMPMSGNTG) is disordered. The residue at position 859 (Ser859) is a Phosphoserine. The interval 861–1098 (NSKNGNMPMS…EYLIELSKVN (238 aa)) is interaction with CDK17. The segment at 893 to 1098 (TSAFSTEELP…EYLIELSKVN (206 aa)) is interaction with CABLES1.

This sequence belongs to the TDRD7 family. As to quaternary structure, found in a mRNP complex, at least composed of TDRD1, TDRD6, TDRD7 and DDX4. Found in a complex containing CABLES1, CDK16 and CDK17. Interacts with CABLES1, CDK17 and PIWIL1.

The protein localises to the cytoplasm. Its function is as follows. Component of specific cytoplasmic RNA granules involved in post-transcriptional regulation of specific genes: probably acts by binding to specific mRNAs and regulating their translation. Required for lens transparency during lens development, by regulating translation of genes such as CRYBB3 and HSPB1 in the developing lens. Also required during spermatogenesis. This chain is Tudor domain-containing protein 7 (TDRD7), found in Homo sapiens (Human).